The following is a 142-amino-acid chain: uncharacterized protein (142 aa).

It localises to the mitochondrion. This is an uncharacterized protein from Mus musculus (Mouse).